The following is a 481-amino-acid chain: MIQGTGSSVGKSLLVAGVSRALTRRGLVVRPFKPQNMSNNAAIAADGGEIGRAQALQARACRISPSHHMNPVLLKPQSEIGAQIVVQGKVHGQATARAYQAMKPQLLGTVLESFGILRKQADIVLVEGAGSASEINLRAGDIANMGFARAANVPVVIAGDIDRGGVIAALVGTKTVLDPDDAAMVRGFLVNRMRGDPSLFAEGMRLIEQQTGWEALGLVPHCEAARALPAEDAADLLRGLSAPTRSGNTVIAVPMLPHIANFDDLDPLAAEDSVTLVMVPPGQPLPVADAIIIPGSKTVIADLAALRHHGWDIDILAHRRRGRSIIGLCGGYQMLGRAIHDPQGFEGPAGSAAGLGLLEIETVLEPHKILTSRSGHLFNHDVPVSGYEMHMGITTGSGLRRPLLSLGPDAPEGCVSADGVVMGTYLHGLFHGGAFRRHLLATLDVSSHGGDHEDAVEHALDALADHMEAHVAIDRLLALSA.

Residues 248–435 enclose the GATase cobBQ-type domain; that stretch reads NTVIAVPMLP…LHGLFHGGAF (188 aa). C329 functions as the Nucleophile in the catalytic mechanism. Residue H427 is part of the active site.

Belongs to the CobB/CobQ family. CobQ subfamily.

The protein operates within cofactor biosynthesis; adenosylcobalamin biosynthesis. Functionally, catalyzes amidations at positions B, D, E, and G on adenosylcobyrinic A,C-diamide. NH(2) groups are provided by glutamine, and one molecule of ATP is hydrogenolyzed for each amidation. This is Cobyric acid synthase from Granulibacter bethesdensis (strain ATCC BAA-1260 / CGDNIH1).